A 1211-amino-acid chain; its full sequence is MARHGDTRSPSPVGSTYSSSRRSRRDDDRYEKSRRDDLRSYRRSRSPERRYRDRDRDSYRRRDRSVDRRDDHRDEDSYRSSRRDRSRDRRRSRDRGDDRDHRRKSRERDYRSRRDDSRDRARRRTDDSADLKHKSRRDDSRTRNLDSKPREASKPSTPAPTAPTEDEKRAERLAKLEAWKQKQAAERERKQREAAAAGGARSILEEIDRKSGLSPAVGSPQSPATPTTDATPTPYSGKFDPKAIVRNAAPAPSTPAVLGNDVAVPQSAKASASSSSMNNHVQANKHPAANSTTSCKLYIPTIRFLQIANVTCTATSTVKRNVGGFGLGAKQVADAEKSSAVKTLGFGEEESKRKKLERLPTPPLEDAKDDMGAVDAAVEDEDDVDMQDGGTEEENAAAARAAAERREERLQSEALRAQSKEAALQSNGDVEMNDVPHQAESEKMEVDAAEEEVDPLDAFMSELAETAPPKKTTGARFTKAKDQQPEAMFGDEHDVDLTAVGEGDADDFLAIANKAKKKKDIPTVDHEKMEYEPFRKKFYTEPSNLAEMTDEEAASLRLELDGIKVRGVDVPKPVMKWSQCGLGVQTLDVIQKLGYENPTSIQSQAIPAIMSGRDVIGVAKTGSGKTIAFLIPMFRHIRDQRPLENMEGPIGLIMTPTRELATQIHKDCKPFLKALNLRAVCAYGGAPIKDQIAELKRGAEIVVCTPGRMIDLLAANAGRVTNLRRVTYVVLDEADRMFDMGFEPQVMKIMANIRPDRQTVLFSATFPRNMEALARKSLTKPIEIVVGGKSVVAPEITQIVEVRNEDTKFVRLLEILGNLYSDDANEDARALIFVDRQEAADTLLRELMRKGYPCMSIHGGKDQIDRDSTIEDFKAGIFPVLIATSVAARGLDVKQLKLVVNYDAPNHLEDYVHRAGRTGRAGNTGTAVTFLTEEQERYSVDIAKALRQSGQKVPEPVQKMVDSFLEKVKAGKEKASASGFGGKGLERLDQERDAARMRERRTYKTGEEGEDEEDKEDKAEKADERFSKIVSSVQSAAAAATTPLPGVPKGIDLDGKITVHRTEKDPAGASKNPLDKVGSAVADIHARLSRAGVMRSGVPIDNRGPDAGAFHATLEINDFPQKARWAVTNRTNVAKILEATGTSITTKGSFYPAGKEPGPGENPKLYILVEGETELAVTNAMRELMRLLKEGTLAAADSDARAPVGGRYNVV.

Disordered stretches follow at residues 1–240 (MARH…GKFD) and 344–429 (LGFG…SNGD). Low complexity predominate over residues 8–20 (RSPSPVGSTYSSS). Composition is skewed to basic and acidic residues over residues 24–87 (RRDD…DRSR), 94–153 (DRGD…REAS), and 165–193 (EDEK…KQRE). The segment covering 219-234 (SPQSPATPTTDATPTP) has biased composition (low complexity). Residues 377–395 (AVEDEDDVDMQDGGTEEEN) show a composition bias toward acidic residues. The segment covering 402-411 (AAERREERLQ) has biased composition (basic and acidic residues). The short motif at 575–603 (MKWSQCGLGVQTLDVIQKLGYENPTSIQS) is the Q motif element. Positions 606-784 (IPAIMSGRDV…RKSLTKPIEI (179 aa)) constitute a Helicase ATP-binding domain. 619-626 (AKTGSGKT) is an ATP binding site. The DEAD box motif lies at 732–735 (DEAD). The region spanning 811-961 (RLLEILGNLY…KVPEPVQKMV (151 aa)) is the Helicase C-terminal domain. A disordered region spans residues 975-1023 (ASASGFGGKGLERLDQERDAARMRERRTYKTGEEGEDEEDKEDKAEKAD). Over residues 984–1007 (GLERLDQERDAARMRERRTYKTGE) the composition is skewed to basic and acidic residues.

Belongs to the DEAD box helicase family. DDX46/PRP5 subfamily.

It is found in the nucleus. It catalyses the reaction ATP + H2O = ADP + phosphate + H(+). ATP-dependent RNA helicase involved spliceosome assembly and in nuclear splicing. Catalyzes an ATP-dependent conformational change of U2 snRNP. Bridges U1 and U2 snRNPs and enables stable U2 snRNP association with intron RNA. This Aspergillus fumigatus (strain ATCC MYA-4609 / CBS 101355 / FGSC A1100 / Af293) (Neosartorya fumigata) protein is Pre-mRNA-processing ATP-dependent RNA helicase prp5 (prp5).